A 257-amino-acid chain; its full sequence is Acyl-[acyl-carrier-protein]--UDP-N-acetylglucosamine O-acyltransferase (257 aa).

This sequence belongs to the transferase hexapeptide repeat family. LpxA subfamily. Homotrimer.

It is found in the cytoplasm. The enzyme catalyses a (3R)-hydroxyacyl-[ACP] + UDP-N-acetyl-alpha-D-glucosamine = a UDP-3-O-[(3R)-3-hydroxyacyl]-N-acetyl-alpha-D-glucosamine + holo-[ACP]. It participates in glycolipid biosynthesis; lipid IV(A) biosynthesis; lipid IV(A) from (3R)-3-hydroxytetradecanoyl-[acyl-carrier-protein] and UDP-N-acetyl-alpha-D-glucosamine: step 1/6. Its function is as follows. Involved in the biosynthesis of lipid A, a phosphorylated glycolipid that anchors the lipopolysaccharide to the outer membrane of the cell. The protein is Acyl-[acyl-carrier-protein]--UDP-N-acetylglucosamine O-acyltransferase of Anaeromyxobacter dehalogenans (strain 2CP-1 / ATCC BAA-258).